Here is a 206-residue protein sequence, read N- to C-terminus: High frequency lysogenization protein HflD homolog (206 aa).

Belongs to the HflD family.

The protein localises to the cytoplasm. Its subcellular location is the cell inner membrane. This chain is High frequency lysogenization protein HflD homolog, found in Idiomarina loihiensis (strain ATCC BAA-735 / DSM 15497 / L2-TR).